We begin with the raw amino-acid sequence, 480 residues long: Adenosylmethionine-8-amino-7-oxononanoate aminotransferase (480 aa).

126 to 127 (GS) serves as a coordination point for pyridoxal 5'-phosphate. Y160 provides a ligand contact to substrate. Residue D270 coordinates pyridoxal 5'-phosphate. Residue K314 is modified to N6-(pyridoxal phosphate)lysine. G350 serves as a coordination point for substrate. Position 351–352 (351–352 (PT)) interacts with pyridoxal 5'-phosphate. Residue R441 coordinates substrate.

It belongs to the class-III pyridoxal-phosphate-dependent aminotransferase family. BioA subfamily. Pyridoxal 5'-phosphate serves as cofactor.

The enzyme catalyses (8S)-8-amino-7-oxononanoate + S-adenosyl-L-methionine = S-adenosyl-4-methylsulfanyl-2-oxobutanoate + (7R,8S)-7,8-diammoniononanoate. Its pathway is cofactor biosynthesis; biotin biosynthesis; 7,8-diaminononanoate from 8-amino-7-oxononanoate (SAM route): step 1/1. Catalyzes the transfer of the alpha-amino group from S-adenosyl-L-methionine (SAM) to 7-keto-8-aminopelargonic acid (KAPA) to form 7,8-diaminopelargonic acid (DAPA). It is the only aminotransferase known to utilize SAM as an amino donor. The chain is Adenosylmethionine-8-amino-7-oxononanoate aminotransferase from Saccharomyces cerevisiae (strain ATCC 204508 / S288c) (Baker's yeast).